The following is a 476-amino-acid chain: Trigger factor (476 aa).

In terms of domain architecture, PPIase FKBP-type spans 169–254; sequence GDKVTLDYVG…VKEVAAAEEL (86 aa). A disordered region spans residues 437–476; the sequence is SRDELLAEDEAEGEEKKAAGETKKKAAPKKKAAKKESAAE. The segment covering 450–460 has biased composition (basic and acidic residues); that stretch reads EEKKAAGETKK.

It belongs to the FKBP-type PPIase family. Tig subfamily.

The protein localises to the cytoplasm. It catalyses the reaction [protein]-peptidylproline (omega=180) = [protein]-peptidylproline (omega=0). Functionally, involved in protein export. Acts as a chaperone by maintaining the newly synthesized protein in an open conformation. Functions as a peptidyl-prolyl cis-trans isomerase. This chain is Trigger factor, found in Chelativorans sp. (strain BNC1).